We begin with the raw amino-acid sequence, 222 residues long: Peroxiredoxin (222 aa).

The region spanning 7-163 is the Thioredoxin domain; it reads PRLGEPAPAF…VIRLVDALQT (157 aa). C49 (cysteine sulfenic acid (-SOH) intermediate) is an active-site residue. R126 is a substrate binding site. Cysteines 212 and 218 form a disulfide.

The protein belongs to the peroxiredoxin family. Prx6 subfamily. As to quaternary structure, homodecamer. Pentamer of dimers that assemble into a ring structure.

The protein localises to the cytoplasm. It carries out the reaction a hydroperoxide + [thioredoxin]-dithiol = an alcohol + [thioredoxin]-disulfide + H2O. Its function is as follows. Thiol-specific peroxidase that catalyzes the reduction of hydrogen peroxide and organic hydroperoxides to water and alcohols, respectively. Plays a role in cell protection against oxidative stress by detoxifying peroxides. The chain is Peroxiredoxin from Aquifex aeolicus (strain VF5).